The sequence spans 465 residues: Glutamate--tRNA ligase (465 aa).

The 'HIGH' region motif lies at 11–21; it reads PSPTGFIHLGN. Positions 243 to 247 match the 'KMSKS' region motif; that stretch reads KMSKR. Position 246 (lysine 246) interacts with ATP.

This sequence belongs to the class-I aminoacyl-tRNA synthetase family. Glutamate--tRNA ligase type 1 subfamily. As to quaternary structure, monomer.

It localises to the cytoplasm. The enzyme catalyses tRNA(Glu) + L-glutamate + ATP = L-glutamyl-tRNA(Glu) + AMP + diphosphate. Functionally, catalyzes the attachment of glutamate to tRNA(Glu) in a two-step reaction: glutamate is first activated by ATP to form Glu-AMP and then transferred to the acceptor end of tRNA(Glu). This Cupriavidus metallidurans (strain ATCC 43123 / DSM 2839 / NBRC 102507 / CH34) (Ralstonia metallidurans) protein is Glutamate--tRNA ligase.